The chain runs to 553 residues: Dihydroxy-acid dehydratase (553 aa).

Residue D78 participates in Mg(2+) binding. C119 provides a ligand contact to [2Fe-2S] cluster. Mg(2+) contacts are provided by D120 and K121. At K121 the chain carries N6-carboxylysine. A [2Fe-2S] cluster-binding site is contributed by C192. Position 442 (E442) interacts with Mg(2+). The Proton acceptor role is filled by S468.

This sequence belongs to the IlvD/Edd family. As to quaternary structure, homodimer. The cofactor is [2Fe-2S] cluster. Mg(2+) serves as cofactor.

It carries out the reaction (2R)-2,3-dihydroxy-3-methylbutanoate = 3-methyl-2-oxobutanoate + H2O. It catalyses the reaction (2R,3R)-2,3-dihydroxy-3-methylpentanoate = (S)-3-methyl-2-oxopentanoate + H2O. Its pathway is amino-acid biosynthesis; L-isoleucine biosynthesis; L-isoleucine from 2-oxobutanoate: step 3/4. It participates in amino-acid biosynthesis; L-valine biosynthesis; L-valine from pyruvate: step 3/4. In terms of biological role, functions in the biosynthesis of branched-chain amino acids. Catalyzes the dehydration of (2R,3R)-2,3-dihydroxy-3-methylpentanoate (2,3-dihydroxy-3-methylvalerate) into 2-oxo-3-methylpentanoate (2-oxo-3-methylvalerate) and of (2R)-2,3-dihydroxy-3-methylbutanoate (2,3-dihydroxyisovalerate) into 2-oxo-3-methylbutanoate (2-oxoisovalerate), the penultimate precursor to L-isoleucine and L-valine, respectively. The protein is Dihydroxy-acid dehydratase of Campylobacter hominis (strain ATCC BAA-381 / DSM 21671 / CCUG 45161 / LMG 19568 / NCTC 13146 / CH001A).